A 449-amino-acid polypeptide reads, in one-letter code: Serine--tRNA ligase (449 aa).

256–258 lines the L-serine pocket; sequence TSE. 287 to 289 contributes to the ATP binding site; that stretch reads RAE. Residue Glu310 coordinates L-serine. 374–377 is a binding site for ATP; the sequence is EISS. Ser410 serves as a coordination point for L-serine.

Belongs to the class-II aminoacyl-tRNA synthetase family. Type-1 seryl-tRNA synthetase subfamily. Homodimer. The tRNA molecule binds across the dimer.

It localises to the cytoplasm. The catalysed reaction is tRNA(Ser) + L-serine + ATP = L-seryl-tRNA(Ser) + AMP + diphosphate + H(+). It catalyses the reaction tRNA(Sec) + L-serine + ATP = L-seryl-tRNA(Sec) + AMP + diphosphate + H(+). The protein operates within aminoacyl-tRNA biosynthesis; selenocysteinyl-tRNA(Sec) biosynthesis; L-seryl-tRNA(Sec) from L-serine and tRNA(Sec): step 1/1. Functionally, catalyzes the attachment of serine to tRNA(Ser). Is also able to aminoacylate tRNA(Sec) with serine, to form the misacylated tRNA L-seryl-tRNA(Sec), which will be further converted into selenocysteinyl-tRNA(Sec). This Xanthomonas oryzae pv. oryzae (strain MAFF 311018) protein is Serine--tRNA ligase.